The following is a 524-amino-acid chain: AAA ATPase forming ring-shaped complexes (524 aa).

The tract at residues 1–29 (MGMGQEKHTDAASQSRDPEAVAAHENDQL) is disordered. The stretch at 22–59 (AAHENDQLRQRNHALAKALTRATEELRKAKAQLEQFMA) forms a coiled coil. 250-255 (GNGKTL) serves as a coordination point for ATP.

This sequence belongs to the AAA ATPase family. As to quaternary structure, homohexamer. Assembles into a hexameric ring structure.

The chain is AAA ATPase forming ring-shaped complexes from Bifidobacterium animalis subsp. lactis (strain BB-12).